The primary structure comprises 412 residues: MDALKRYDPEVFAAIQQEVERQQRNIELIASENFVPKAVLEAAGTVLTNKYAEGYPGRRYYGGCEYVDIVENIARERLKAAFGAEHVNVQPHSGANANTAVYFAFLQPGDTVLGMNLAQGGHLTHGSPVNFSGRTYNFVPYGLDPETERINMDQVAELARQHRPKLIVAGYSAYPRVLDFKRFREIAEEVGAILMVDMAHFAGLAATGYYPNPVEHAHVVTTTTHKTLRGPRGGAILCKKEFAKEIDKAVFPGMQGGPLMHIIAAKAVAFKQLSDPDYRAYCGQVVKNAKALAQALLERGYRLVTGGTDNHLMLVDLRPKGITGRDAEHLLDRVSITVNKNAIPNDPEKPMVTSGIRIGTPAMTTRGMKEAEMVQIADLIDRAITHRNDEAELDRIRAEVHELTARFPLYAD.

Residues leucine 117 and 121 to 123 (GHL) each bind (6S)-5,6,7,8-tetrahydrofolate. Lysine 226 bears the N6-(pyridoxal phosphate)lysine mark.

This sequence belongs to the SHMT family. In terms of assembly, homodimer. Pyridoxal 5'-phosphate is required as a cofactor.

The protein localises to the cytoplasm. The enzyme catalyses (6R)-5,10-methylene-5,6,7,8-tetrahydrofolate + glycine + H2O = (6S)-5,6,7,8-tetrahydrofolate + L-serine. Its pathway is one-carbon metabolism; tetrahydrofolate interconversion. It functions in the pathway amino-acid biosynthesis; glycine biosynthesis; glycine from L-serine: step 1/1. Functionally, catalyzes the reversible interconversion of serine and glycine with tetrahydrofolate (THF) serving as the one-carbon carrier. This reaction serves as the major source of one-carbon groups required for the biosynthesis of purines, thymidylate, methionine, and other important biomolecules. Also exhibits THF-independent aldolase activity toward beta-hydroxyamino acids, producing glycine and aldehydes, via a retro-aldol mechanism. This chain is Serine hydroxymethyltransferase, found in Symbiobacterium thermophilum (strain DSM 24528 / JCM 14929 / IAM 14863 / T).